Consider the following 451-residue polypeptide: G-protein coupled receptor 61 (451 aa).

Positions 1–14 are enriched in low complexity; the sequence is MESSPIPQSSGNSS. A disordered region spans residues 1 to 31; that stretch reads MESSPIPQSSGNSSTLGRVPQTPGPSTASGV. Topologically, residues 1–44 are extracellular; that stretch reads MESSPIPQSSGNSSTLGRVPQTPGPSTASGVPEVGLRDVASESV. Asparagine 12 carries an N-linked (GlcNAc...) asparagine glycan. Residues 45–67 form a helical membrane-spanning segment; sequence ALFFMLLLDLTAVAGNAAVMAVI. The Cytoplasmic portion of the chain corresponds to 68–75; the sequence is AKTPALRK. Residues 76–98 traverse the membrane as a helical segment; it reads FVFVFHLCLVDLLAALTLMPLAM. Over 99 to 112 the chain is Extracellular; it reads LSSSALFDHALFGE. The chain crosses the membrane as a helical span at residues 113–135; that stretch reads VACRLYLFLSVCFVSLAILSVSA. Over 136–155 the chain is Cytoplasmic; it reads INVERYYYVVHPMRYEVRMT. A helical membrane pass occupies residues 156 to 178; the sequence is LGLVASVLVGVWVKALAMASVPV. The Extracellular portion of the chain corresponds to 179-206; sequence LGRVSWEEGAPSVPPGCSLQWSHSAYCQ. A helical membrane pass occupies residues 207 to 229; sequence LFVVVFAVLYFLLPLLLILVVYC. The Cytoplasmic segment spans residues 230–287; sequence SMFRVARVAAMQHGPLPTWMETPRQRSESLSSRSTMVTSSGAPQTTPHRTFGGGKAAV. The helical transmembrane segment at 288–310 threads the bilayer; it reads VLLAVGGQFLLCWLPYFSFHLYV. At 311–324 the chain is on the extracellular side; it reads ALSAQPISTGQVES. Residues 325–344 form a helical membrane-spanning segment; the sequence is VVTWIGYFCFTSNPFFYGCL. At 345–451 the chain is on the cytoplasmic side; sequence NRQIRGELSK…RPAASPRLES (107 aa).

It belongs to the G-protein coupled receptor 1 family. As to quaternary structure, forms heterodimer with MTNR1B. Interacts with ARRB1 and ARRB2 in a spontaneous and agonist-independent manner; leading to the internalization of GPR61 in the endosomal compartment. As to expression, expressed in brain; detected in frontal and temporal lobes, occipital pole, amygdala and hippocampus. Also expressed in testis and T cells, B cells, and monocyte. Low expression in many other tissues. Widely expressed in the hippocampus (at protein level).

The protein localises to the cell membrane. The protein resides in the endosome membrane. Its function is as follows. Orphan G-protein coupled receptor. Constitutively activates the G(s)-alpha/cAMP signaling pathway. Shows a reciprocal regulatory interaction with the melatonin receptor MTNR1B most likely through receptor heteromerization. May be involved in the regulation of food intake and body weight. In Homo sapiens (Human), this protein is G-protein coupled receptor 61 (GPR61).